The sequence spans 89 residues: OMEGA-ectatommitoxin(02)-Rm1b (89 aa).

An N-terminal signal peptide occupies residues 1 to 30 (MKDSYISIVIAYLMVTFILVSSMPIEGEKG). 3 disulfide bridges follow: cysteine 39-cysteine 52, cysteine 47-cysteine 68, and cysteine 70-cysteine 79. An EGF-like domain is found at 43–80 (YANYCFNGKCVHFVAQDEPGKPCYSCICDKFYIGKRCG).

The protein belongs to the EGF domain peptide family. In terms of tissue distribution, expressed by the venom gland.

Its subcellular location is the secreted. Functionally, ant peptide with probable defensive activity which acts as a potent agonist of the mammalian epidermal growth factor receptor (EGFR). Mimics, both structurally and functionally, vertebrate epidermal growth factor (EGF) peptide hormones. In vivo, intraplantar injection in mice causes long-lasting (several days) hypersensitivity of the injected paw to both mechanical and thermal stimuli. Its long-lasting effect is unusual for venom toxins whose effects are usually immediate. One possible explanation is that it would reduce the duration of a nest attack, discourage future attacks, or enhance the actions of subsequent exposure to other pain-inducing venom peptides. The chain is OMEGA-ectatommitoxin(02)-Rm1b from Rhytidoponera metallica (Australian green-headed ant).